The following is a 358-amino-acid chain: Carbohydrate sulfotransferase 10 (358 aa).

The Cytoplasmic segment spans residues 1–6; the sequence is MHHQWL. The chain crosses the membrane as a helical; Signal-anchor for type II membrane protein span at residues 7-27; the sequence is LLAACFWVIFMFMVASKFITL. Residues 28-358 lie on the Lumenal side of the membrane; it reads TFKDPDGYGA…GYRVPDFLLN (331 aa). The N-linked (GlcNAc...) asparagine glycan is linked to Asn-101. Residues 129 to 135 and 191 to 199 contribute to the 3'-phosphoadenylyl sulfate site; these read PKVGNTQ and RDPFERLIS. N-linked (GlcNAc...) asparagine glycosylation is present at Asn-318.

This sequence belongs to the sulfotransferase 2 family. Predominantly expressed in hypertrophic, prehypertrophic and proliferative chondrocytes at E12 but is down-regulated in epiphyseal chondrocytes.

The protein localises to the golgi apparatus membrane. Catalyzes the transfer of sulfate to position 3 of terminal glucuronic acid of both protein- and lipid-linked oligosaccharides. Participates in biosynthesis of HNK-1 carbohydrate structure, a sulfated glucuronyl-lactosaminyl residue carried by many neural recognition molecules, which is involved in cell interactions during ontogenetic development and in synaptic plasticity in the adult. In Gallus gallus (Chicken), this protein is Carbohydrate sulfotransferase 10 (CHST10).